The chain runs to 575 residues: Phosphoenolpyruvate-protein phosphotransferase (575 aa).

Residue Tyr-122 is modified to Phosphotyrosine. His-189 acts as the Tele-phosphohistidine intermediate in catalysis. The phosphoenolpyruvate site is built by Arg-296 and Arg-332. Residues Glu-431 and Asp-455 each contribute to the Mg(2+) site. Residues Asn-454 to Asp-455 and Arg-465 each bind phosphoenolpyruvate. The Proton donor role is filled by Cys-502.

This sequence belongs to the PEP-utilizing enzyme family. Homodimer. Interacts with the pole-localizer protein TmaR. Binding to TmaR is reversible as long as TmaR can get phosphorylated, whereas binding to non-phosphorylated TmaR is very strong and shifts the equilibrium toward binding. It depends on Mg(2+) as a cofactor. Post-translationally, phosphorylated on Tyr-122. Phosphorylation on Tyr-122 is important for polar localization but not for interaction with TmaR and for activity.

It localises to the cytoplasm. It carries out the reaction L-histidyl-[protein] + phosphoenolpyruvate = N(pros)-phospho-L-histidyl-[protein] + pyruvate. Inhibited by oxalate. General (non sugar-specific) component of the phosphoenolpyruvate-dependent sugar phosphotransferase system (sugar PTS). This major carbohydrate active-transport system catalyzes the phosphorylation of incoming sugar substrates concomitantly with their translocation across the cell membrane. Enzyme I transfers the phosphoryl group from phosphoenolpyruvate (PEP) to the phosphoryl carrier protein (HPr). Can also use (Z)-3-fluoro-PEP (ZFPEP), (Z)-3-methyl-PEP (ZMePEP), (Z)-3-chloro-PEP (ZClPEP) and (E)-3-chloro-PEP (EClPEP) as alternative phosphoryl donors. This chain is Phosphoenolpyruvate-protein phosphotransferase, found in Escherichia coli (strain K12).